Reading from the N-terminus, the 154-residue chain is Aspartate carbamoyltransferase regulatory chain (154 aa).

C109, C114, C138, and C141 together coordinate Zn(2+).

The protein belongs to the PyrI family. Contains catalytic and regulatory chains. Requires Zn(2+) as cofactor.

Involved in allosteric regulation of aspartate carbamoyltransferase. In Yersinia pestis, this protein is Aspartate carbamoyltransferase regulatory chain.